The primary structure comprises 153 residues: Large ribosomal subunit protein uL13 (153 aa).

Positions 134–153 (EAQQPQALDVGSLNRKNVSA) are disordered.

It belongs to the universal ribosomal protein uL13 family. Part of the 50S ribosomal subunit.

In terms of biological role, this protein is one of the early assembly proteins of the 50S ribosomal subunit, although it is not seen to bind rRNA by itself. It is important during the early stages of 50S assembly. This Methylorubrum extorquens (strain CM4 / NCIMB 13688) (Methylobacterium extorquens) protein is Large ribosomal subunit protein uL13.